A 139-amino-acid polypeptide reads, in one-letter code: Putative lipoprotein LpqV (139 aa).

The signal sequence occupies residues 1–25; that stretch reads MRPSRYAPLLCAMVLALAWLSAVAG. A lipid anchor (N-palmitoyl cysteine) is attached at cysteine 26. The S-diacylglycerol cysteine moiety is linked to residue cysteine 26.

Its subcellular location is the cell membrane. The protein is Putative lipoprotein LpqV (lpqV) of Mycobacterium bovis (strain ATCC BAA-935 / AF2122/97).